The chain runs to 222 residues: UPF0758 protein Cag_1513 (222 aa).

The MPN domain occupies 100 to 222 (KIMAAGDVFE…WYSFRERGLL (123 aa)). Residues H171, H173, and D184 each contribute to the Zn(2+) site. The JAMM motif motif lies at 171–184 (HNHPSGDVNPSNAD).

It belongs to the UPF0758 family.

This Chlorobium chlorochromatii (strain CaD3) protein is UPF0758 protein Cag_1513.